The following is a 574-amino-acid chain: Galactose transporter (574 aa).

The tract at residues 1 to 57 (MAVEENNMPVVSQQPQAGEDVISSLSKDSHLSAQSQKYSNDELKAGESGSEGSQSVP) is disordered. At 1 to 70 (MAVEENNMPV…PKKPMSEYVT (70 aa)) the chain is on the cytoplasmic side. A compositionally biased stretch (polar residues) spans 23-38 (SSLSKDSHLSAQSQKY). Residues serine 32, serine 35, serine 39, serine 48, serine 50, serine 53, and serine 55 each carry the phosphoserine modification. Residues 71 to 91 (VSLLCLCVAFGGFMFGWDTGT) traverse the membrane as a helical segment. Residues 92-121 (ISGFVVQTDFLRRFGMKHKDGTHYLSNVRT) are Extracellular-facing. The helical transmembrane segment at 122-142 (GLIVAIFNIGCAFGGIILSKG) threads the bilayer. The Cytoplasmic segment spans residues 143–149 (GDMYGRK). The chain crosses the membrane as a helical span at residues 150–170 (KGLSIVVSVYIVGIIIQIASI). At 171-175 (NKWYQ) the chain is on the extracellular side. The helical transmembrane segment at 176-196 (YFIGRIISGLGVGGIAVLCPM) threads the bilayer. Over 197-207 (LISEIAPKHLR) the chain is Cytoplasmic. Residues 208–228 (GTLVSCYQLMITAGIFLGYCT) traverse the membrane as a helical segment. The Extracellular portion of the chain corresponds to 229–242 (NYGTKSYSNSVQWR). The helical transmembrane segment at 243 to 263 (VPLGLCFAWSLFMIGALTLVP) threads the bilayer. Residues 264 to 342 (ESPRYLCEVN…MGVFVQMFQQ (79 aa)) lie on the Cytoplasmic side of the membrane. A helical membrane pass occupies residues 343–362 (LTGNNYFFYYGTVIFKSVGL). The Extracellular segment spans residues 363 to 366 (DDSF). Residues 367–387 (ETSIVIGVVNFASTFFSLWTV) traverse the membrane as a helical segment. Residues 388 to 394 (ENLGHRK) are Cytoplasmic-facing. A helical membrane pass occupies residues 395–415 (CLLLGAATMMACMVIYASVGV). The Extracellular segment spans residues 416-435 (TRLYPHGKSQPSSKGAGNCM). The helical transmembrane segment at 436–456 (IVFTCFYIFCYATTWAPVAWV) threads the bilayer. Residues 457-472 (ITAESFPLRVKSKCMA) lie on the Cytoplasmic side of the membrane. The helical transmembrane segment at 473-493 (LASASNWVWGFLIAFFTPFIT) threads the bilayer. Residues 494–499 (SAINFY) are Extracellular-facing. The chain crosses the membrane as a helical span at residues 500 to 520 (YGYVFMGCLVAMFFYVFFFVP). The Cytoplasmic segment spans residues 521 to 574 (ETKGLSLEEIQELWEEGVLPWKSEGWIPSSRRGNNYDLEDLQHDDKPWYKAMLE).

Belongs to the major facilitator superfamily. Sugar transporter (TC 2.A.1.1) family.

The protein localises to the membrane. Functionally, GAL2 is a facilitated diffusion transporter required for both the high-affinity galactokinase-dependent and low-affinity galactokinase-independent galactose transport processes. This Saccharomyces cerevisiae (strain ATCC 204508 / S288c) (Baker's yeast) protein is Galactose transporter (GAL2).